The following is a 492-amino-acid chain: NADH-quinone oxidoreductase subunit N (492 aa).

A run of 14 helical transmembrane segments spans residues 16–36 (LLIP…VGVF), 44–64 (LYIT…FLEG), 81–101 (ISLL…LFFM), 111–131 (GAEF…MASS), 134–154 (LILI…LIAL), 168–188 (FIMG…LYAA), 210–230 (ILVF…VTLV), 244–264 (NALL…AVII), 276–296 (AFVE…PNLI), 306–326 (MLAY…LINT), 332–352 (VIFF…GILW), 382–402 (LAIL…FCVF), 423–443 (IMAI…IYIF), and 463–483 (FALS…QNLL).

The protein belongs to the complex I subunit 2 family. As to quaternary structure, NDH-1 is composed of 14 different subunits. Subunits NuoA, H, J, K, L, M, N constitute the membrane sector of the complex.

The protein localises to the cell inner membrane. It catalyses the reaction a quinone + NADH + 5 H(+)(in) = a quinol + NAD(+) + 4 H(+)(out). In terms of biological role, NDH-1 shuttles electrons from NADH, via FMN and iron-sulfur (Fe-S) centers, to quinones in the respiratory chain. The immediate electron acceptor for the enzyme in this species is believed to be ubiquinone. Couples the redox reaction to proton translocation (for every two electrons transferred, four hydrogen ions are translocated across the cytoplasmic membrane), and thus conserves the redox energy in a proton gradient. This is NADH-quinone oxidoreductase subunit N from Helicobacter hepaticus (strain ATCC 51449 / 3B1).